The sequence spans 617 residues: Procollagen galactosyltransferase 1 (617 aa).

Residues 1–31 (MAALPRGSRGLPLLPLLLLLPPLGGPRGADG) form the signal peptide. N-linked (GlcNAc...) asparagine glycosylation is found at Asn91, Asn179, and Asn376. Residues 582–601 (DRAKSQKMREQQALSREAKN) are compositionally biased toward basic and acidic residues. Residues 582–617 (DRAKSQKMREQQALSREAKNSDVLQSPLDSTARDEL) form a disordered region. A Prevents secretion from ER motif is present at residues 614–617 (RDEL).

This sequence belongs to the glycosyltransferase 25 family. Post-translationally, N-glycosylated.

Its subcellular location is the endoplasmic reticulum lumen. It carries out the reaction (5R)-5-hydroxy-L-lysyl-[collagen] + UDP-alpha-D-galactose = (5R)-5-O-(beta-D-galactosyl)-5-hydroxy-L-lysyl-[collagen] + UDP + H(+). Its function is as follows. Beta-galactosyltransferase that transfers beta-galactose to hydroxylysine residues of type I collagen. By acting on collagen glycosylation, facilitates the formation of collagen triple helix. Also involved in the biosynthesis of collagen type IV. This is Procollagen galactosyltransferase 1 (Colgalt1) from Mus musculus (Mouse).